Consider the following 545-residue polypeptide: Chaperonin GroEL (545 aa).

Residues 29–32, Lys50, 86–90, Gly413, 479–481, and Asp496 contribute to the ATP site; these read TLGP, DGTTT, and NAA. Positions 525–545 are disordered; sequence KPEKEKAPAAAGAPDMGGMDF. The span at 532 to 545 shows a compositional bias: low complexity; it reads PAAAGAPDMGGMDF.

Belongs to the chaperonin (HSP60) family. Forms a cylinder of 14 subunits composed of two heptameric rings stacked back-to-back. Interacts with the co-chaperonin GroES.

The protein resides in the cytoplasm. It carries out the reaction ATP + H2O + a folded polypeptide = ADP + phosphate + an unfolded polypeptide.. Functionally, together with its co-chaperonin GroES, plays an essential role in assisting protein folding. The GroEL-GroES system forms a nano-cage that allows encapsulation of the non-native substrate proteins and provides a physical environment optimized to promote and accelerate protein folding. This chain is Chaperonin GroEL, found in Deinococcus geothermalis (strain DSM 11300 / CIP 105573 / AG-3a).